Consider the following 150-residue polypeptide: Snaclec rhinocetin subunit beta (150 aa).

A signal peptide spans 1–23; that stretch reads MGRFIFLSSGLLVVFLSLSGTGA. Cystine bridges form between Cys-27-Cys-38, Cys-55-Cys-144, and Cys-121-Cys-136. Residues 34 to 145 form the C-type lectin domain; that stretch reads YEGYCYKVFK…CNRQQYFVCK (112 aa).

The protein belongs to the snaclec family. Heterodimer; disulfide-linked. In terms of tissue distribution, expressed by the venom gland.

The protein resides in the secreted. Its function is as follows. Antagonist of the alpha-2 subunit of the integrin alpha-2/beta-1 (ITGA2/ITGB1) on human platelets and endothelial cells. This protein inhibits collagen-stimulated activation of human platelets in a dose-dependent manner. In addition, it antagonizes the binding of monoclonal antibodies against the alpha-2 subunit of integrin alpha-2/beta-1 to platelets and it coimmunoprecipitates with this integrin. This is Snaclec rhinocetin subunit beta from Bitis rhinoceros (West African gaboon viper).